A 61-amino-acid polypeptide reads, in one-letter code: Small ribosomal subunit protein uS14 (61 aa).

Residues C24, C27, C40, and C43 each coordinate Zn(2+).

The protein belongs to the universal ribosomal protein uS14 family. Zinc-binding uS14 subfamily. Part of the 30S ribosomal subunit. Contacts proteins S3 and S10. Zn(2+) serves as cofactor.

Its function is as follows. Binds 16S rRNA, required for the assembly of 30S particles and may also be responsible for determining the conformation of the 16S rRNA at the A site. The protein is Small ribosomal subunit protein uS14 of Coprothermobacter proteolyticus (strain ATCC 35245 / DSM 5265 / OCM 4 / BT).